We begin with the raw amino-acid sequence, 509 residues long: Heat shock 70 kDa protein 14 (509 aa).

The protein belongs to the heat shock protein 70 family. In terms of assembly, component of ribosome-associated complex (RAC), a heterodimer composed of Hsp70/DnaK-type chaperone HSPA14 and Hsp40/DnaJ-type chaperone DNAJC2.

It localises to the cytoplasm. The protein resides in the cytosol. In terms of biological role, component of the ribosome-associated complex (RAC), a complex involved in folding or maintaining nascent polypeptides in a folding-competent state. In the RAC complex, binds to the nascent polypeptide chain, while DNAJC2 stimulates its ATPase activity. The chain is Heat shock 70 kDa protein 14 (Hspa14) from Rattus norvegicus (Rat).